We begin with the raw amino-acid sequence, 350 residues long: Tsukushi (350 aa).

An N-terminal signal peptide occupies residues 1–17; it reads MAPSWLFLLFIPGMVGS. The LRRNT domain maps to 18–59; that stretch reads SRSCFPGCQCIVDNFGLFHSFSLTKVDCSGVGPHVVPVSIPL. LRR repeat units follow at residues 60–81, 86–107, 110–131, 133–154, 159–180, 183–203, 204–225, 228–250, 253–275, and 278–299; these read DTSY…VLSG, TLIN…TFSK, YLES…SFLY, RLTE…AFTL, RSMT…AERP, NIHS…LHGI, PLRH…SFLG, GLTH…SFKT, SLLD…MFFG, and SLQE…IMLN. 2 N-linked (GlcNAc...) asparagine glycosylation sites follow: asparagine 75 and asparagine 91.

As to quaternary structure, interacts with bmp4. Interacts with dll1 (via extracellular region). Interacts with fgf8; inhibits fgf8 signaling. Interacts with nodal2/Xnr2; enhances nodal2 activity.

It is found in the secreted. Functionally, contributes to various developmental events through its interactions with multiple signaling pathways. Dorsalizing factor which functions as an inhibitor of bone morphogenetic proteins (BMP) during gastrulation. Promotes dll1-dependent activation of Notch signaling and is required for neural crest formation. Induces endoderm and dorsal mesoderm formation by enhancing nodal2/Xnr2 activity while inhibiting ventrolateral mesoderm formation through inhibition of fgf8. The polypeptide is Tsukushi (tsku) (Xenopus tropicalis (Western clawed frog)).